Consider the following 298-residue polypeptide: N-acetylmuramic acid 6-phosphate etherase (298 aa).

An SIS domain is found at 55-218 (IHAQVSGGGR…STGLMIKSGK (164 aa)). The active-site Proton donor is the glutamate 83. Glutamate 114 is a catalytic residue.

The protein belongs to the GCKR-like family. MurNAc-6-P etherase subfamily. As to quaternary structure, homodimer.

The enzyme catalyses N-acetyl-D-muramate 6-phosphate + H2O = N-acetyl-D-glucosamine 6-phosphate + (R)-lactate. It participates in amino-sugar metabolism; 1,6-anhydro-N-acetylmuramate degradation. The protein operates within amino-sugar metabolism; N-acetylmuramate degradation. Its pathway is cell wall biogenesis; peptidoglycan recycling. Its function is as follows. Specifically catalyzes the cleavage of the D-lactyl ether substituent of MurNAc 6-phosphate, producing GlcNAc 6-phosphate and D-lactate. Together with AnmK, is also required for the utilization of anhydro-N-acetylmuramic acid (anhMurNAc) either imported from the medium or derived from its own cell wall murein, and thus plays a role in cell wall recycling. The polypeptide is N-acetylmuramic acid 6-phosphate etherase (Escherichia coli O8 (strain IAI1)).